The primary structure comprises 57 residues: Metallothionein (57 aa).

It belongs to the metallothionein superfamily. Type 14 family.

Functionally, this protein complexes cadmium, zinc and copper. This Thermostichus vulcanus (Synechococcus vulcanus) protein is Metallothionein (mtnA).